Consider the following 483-residue polypeptide: Regulatory protein ViaA (483 aa).

It belongs to the ViaA family. As to quaternary structure, homodimer. Interacts with RavA.

The protein localises to the cytoplasm. In terms of biological role, component of the RavA-ViaA chaperone complex, which may act on the membrane to optimize the function of some of the respiratory chains. ViaA stimulates the ATPase activity of RavA. The protein is Regulatory protein ViaA of Escherichia coli O1:K1 / APEC.